A 1507-amino-acid chain; its full sequence is DDB1- and CUL4-associated factor 1 (1507 aa).

The protein kinase-like stretch occupies residues 141–500 (QPLRTYSTGL…STLEILNLED (360 aa)). Residues Ser-202 and Ser-255 each carry the phosphoserine modification. Residues 242–288 (HLDSGHKTSSRVNSTTKPEDGGLKKNKSAKQGDRENFRKAKQKLGFS) form a disordered region. The region spanning 562 to 593 (SYTHEQIVEMMEFLIEYGPAQLYWEPAEVFLK) is the Chromo domain. Position 701 is an N6-acetyllysine (Lys-701). Ser-828 is subject to Phosphoserine. Residues 846–878 (PEKELLLLIRNHLISKGLGETATVLTKEADLPM) enclose the LisH domain. Position 888 is a phosphothreonine (Thr-888). A phosphoserine mark is found at Ser-895 and Ser-898. Residues 917 to 947 (AAVGASAPSAPTAHPQPRPPQGPLALPGPSY) are disordered. Residues Ser-979 and Ser-1000 each carry the phosphoserine modification. WD repeat units lie at residues 1091–1130 (EDESGFTCCAFSARERFLMLGTCTGQLKLYNVFSGQEEAS), 1133–1174 (CHNS…DMKH), 1176–1213 (FTEDHYVEFSKHSQDRVIGTKGDIAHIYDIQTGNKLLT), 1215–1247 (FNPDLANNYKRNCATFNPTDDLVLNDGVLWDVR), and 1248–1290 (SAQA…LLHT). The tract at residues 1091-1290 (EDESGFTCCA…DLRTFHLLHT (200 aa)) is WD repeat-like region. Short sequence motifs (DWD box) lie at residues 1242 to 1249 (VLWDVRSA) and 1278 to 1285 (EIWDLRTF). Ser-1328 carries the post-translational modification Phosphoserine. A disordered region spans residues 1393-1507 (RLAEDEDEEE…EDDIILSLNE (115 aa)). Composition is skewed to acidic residues over residues 1396–1483 (EDED…EEVE) and 1490–1501 (DSSDNSDLEDDI). An interaction with NF2 region spans residues 1418 to 1507 (DDDTDDLDEL…EDDIILSLNE (90 aa)).

It belongs to the VPRBP/DCAF1 family. Component of the DCX (DDB1-CUL4-X-box) E3 ubiquitin-protein ligase complex, named CUL4A-RBX1-DDB1-DCAF1/VPRBP complex. Interacts with DDB1; the interaction is direct. Also forms a ternary complex with DDA1 and DDB1. Interacts with NF2 (via FERM domain). Component of the EDVP complex, a E3 ligase complex containing DYRK2, EDD/UBR5, DDB1 and DCAF1. Interacts with DYRK2; the interaction is direct. Interacts with RAG1; the interaction is direct. Interacts with LLGL1 and LLGL2. Interacts with histone H3. Interacts with ESR1 and LATS1; probably recruited by LATS1 to promote ESR1 ubiquitination and ubiquitin-mediated proteasomal degradation. Directly interacts with TET1, TET2 and TET3 (via C-terminus). Interacts with CEP78; promoting DCAF1 localization to centrosomes. In terms of assembly, (Microbial infection) Interacts with HIV-1 virus Vpr protein; the interaction is direct. As to quaternary structure, (Microbial infection) Interacts with HIV-2 virus Vpx protein; the interaction is direct and the complex recruits SAMHD1 to promote its ubiquitin-dependent proteasomal degradation. (Microbial infection) Interacts (via C-terminus) with human cytomegalovirus protein UL35; this interaction induces the accumulation of cells in the G2 phase of the cell cycle. As to expression, ubiquitously expressed.

The protein localises to the cytoplasm. It localises to the nucleus. It is found in the cytoskeleton. Its subcellular location is the microtubule organizing center. The protein resides in the centrosome. The catalysed reaction is L-seryl-[protein] + ATP = O-phospho-L-seryl-[protein] + ADP + H(+). It carries out the reaction L-threonyl-[protein] + ATP = O-phospho-L-threonyl-[protein] + ADP + H(+). It functions in the pathway protein modification; protein ubiquitination. Acts both as a substrate recognition component of E3 ubiquitin-protein ligase complexes and as an atypical serine/threonine-protein kinase, playing key roles in various processes such as cell cycle, telomerase regulation and histone modification. Probable substrate-specific adapter of a DCX (DDB1-CUL4-X-box) E3 ubiquitin-protein ligase complex, named CUL4A-RBX1-DDB1-DCAF1/VPRBP complex, which mediates ubiquitination and proteasome-dependent degradation of proteins such as NF2. Involved in the turnover of methylated proteins: recognizes and binds methylated proteins via its chromo domain, leading to ubiquitination of target proteins by the RBX1-DDB1-DCAF1/VPRBP complex. The CUL4A-RBX1-DDB1-DCAF1/VPRBP complex is also involved in B-cell development: DCAF1 is recruited by RAG1 to ubiquitinate proteins, leading to limit error-prone repair during V(D)J recombination. Also part of the EDVP complex, an E3 ligase complex that mediates ubiquitination of proteins such as TERT, leading to TERT degradation and telomerase inhibition. The EDVP complex also mediates ubiquitination and degradation of CCP110. Also acts as an atypical serine/threonine-protein kinase that specifically mediates phosphorylation of 'Thr-120' of histone H2A (H2AT120ph) in a nucleosomal context, thereby repressing transcription. H2AT120ph is present in the regulatory region of many tumor suppresor genes, down-regulates their transcription and is present at high level in a number of tumors. Involved in JNK-mediated apoptosis during cell competition process via its interaction with LLGL1 and LLGL2. By acting on TET dioxygenses, essential for oocyte maintenance at the primordial follicle stage, hence essential for female fertility. Its function is as follows. (Microbial infection) In case of infection by HIV-1 virus, it is recruited by HIV-1 Vpr in order to hijack the CUL4A-RBX1-DDB1-DCAF1/VPRBP function leading to arrest the cell cycle in G2 phase, and also to protect the viral protein from proteasomal degradation by another E3 ubiquitin ligase. The HIV-1 Vpr protein hijacks the CUL4A-RBX1-DDB1-DCAF1/VPRBP complex to promote ubiquitination and degradation of proteins such as TERT and ZIP/ZGPAT. Functionally, (Microbial infection) In case of infection by HIV-2 virus, it is recruited by HIV-2 Vpx in order to hijack the CUL4A-RBX1-DDB1-DCAF1/VPRBP function leading to enhanced efficiency of macrophage infection and promotion of the replication of cognate primate lentiviruses in cells of monocyte/macrophage lineage. In Homo sapiens (Human), this protein is DDB1- and CUL4-associated factor 1.